A 304-amino-acid polypeptide reads, in one-letter code: Acetaldehyde dehydrogenase 2 (304 aa).

Cys131 serves as the catalytic Acyl-thioester intermediate. Residues 162-170 (SAGPGTRKN) and Asn273 contribute to the NAD(+) site.

Belongs to the acetaldehyde dehydrogenase family.

The enzyme catalyses acetaldehyde + NAD(+) + CoA = acetyl-CoA + NADH + H(+). This chain is Acetaldehyde dehydrogenase 2, found in Dechloromonas aromatica (strain RCB).